A 165-amino-acid chain; its full sequence is C-phycoerythrin class 2 subunit alpha (165 aa).

3 residues coordinate phycourobilin: cysteine 75, cysteine 83, and cysteine 140.

This sequence belongs to the phycobiliprotein family. Heterodimer of an alpha and a beta chain. Post-translationally, contains three covalently linked phycourobilin chromophores.

It is found in the cellular thylakoid membrane. Its function is as follows. Light-harvesting photosynthetic bile pigment-protein from the phycobiliprotein complex. The sequence is that of C-phycoerythrin class 2 subunit alpha (mpeA) from Synechococcus sp. (strain WH8103).